The chain runs to 46 residues: Spectrin alpha chain, non-erythrocytic 1 (46 aa).

Spectrin repeat units follow at residues Ala1 to Asp5, Phe7 to Arg14, Ser15 to Ser20, Ala21 to Arg26, Leu27 to Lys35, and Asp39 to Lys46.

The protein belongs to the spectrin family. Associates with the gamma-tubulin complex in brain, but not in kidney, liver, sperm, or uterus. Like erythrocyte spectrin, the spectrin-like proteins are capable of forming dimers which can further associate to tetramers. Interacts with isoform 1 of ACP1. Interacts with CALM and EMD. Interacts (via C-terminal spectrin repeats) with TRPC4. Identified in a complex with ACTN4, CASK, IQGAP1, MAGI2, NPHS1 and SPTBN1. Interacts with CLN3; this interaction regulates the fodrin localization at the plasma membrane.

It is found in the cytoplasm. The protein localises to the cytoskeleton. The protein resides in the cell cortex. Its function is as follows. Fodrin, which seems to be involved in secretion, interacts with calmodulin in a calcium-dependent manner and is thus candidate for the calcium-dependent movement of the cytoskeleton at the membrane. This chain is Spectrin alpha chain, non-erythrocytic 1 (SPTAN1), found in Capra hircus (Goat).